The primary structure comprises 66 residues: Large ribosomal subunit protein uL29 (66 aa).

This sequence belongs to the universal ribosomal protein uL29 family.

This chain is Large ribosomal subunit protein uL29, found in Hydrogenobaculum sp. (strain Y04AAS1).